The chain runs to 126 residues: Holo-[acyl-carrier-protein] synthase (126 aa).

Aspartate 9 and glutamate 58 together coordinate Mg(2+).

This sequence belongs to the P-Pant transferase superfamily. AcpS family. It depends on Mg(2+) as a cofactor.

The protein resides in the cytoplasm. The enzyme catalyses apo-[ACP] + CoA = holo-[ACP] + adenosine 3',5'-bisphosphate + H(+). Transfers the 4'-phosphopantetheine moiety from coenzyme A to a Ser of acyl-carrier-protein. This is Holo-[acyl-carrier-protein] synthase from Erwinia tasmaniensis (strain DSM 17950 / CFBP 7177 / CIP 109463 / NCPPB 4357 / Et1/99).